The sequence spans 419 residues: Erythromycin esterase type II (419 aa).

In terms of biological role, this enzyme confers resistance to erythromycin through inactivation by hydrolyzing the lactone ring of the antibiotic. This Escherichia coli protein is Erythromycin esterase type II (ereB).